Here is an 815-residue protein sequence, read N- to C-terminus: DNA topoisomerase 1 (815 aa).

Positions 3–119 (KHLLIVESPA…QRIVFTEITP (117 aa)) constitute a Toprim domain. Positions 9 and 82 each coordinate Mg(2+). Residues 133–573 (ASDLVDAQQA…KFWVPFKELV (441 aa)) form the Topo IA-type catalytic domain. An interaction with DNA region spans residues 167-172 (SAGRVQ). The active-site O-(5'-phospho-DNA)-tyrosine intermediate is the Tyr308. Residues 759-815 (TGKPARKNFSTKKTATKNETRKQTTKKRTTDAKATKKVSDKPVKKQIKKRIAPNITQ) are disordered. Basic and acidic residues predominate over residues 774 to 801 (TKNETRKQTTKKRTTDAKATKKVSDKPV).

The protein belongs to the type IA topoisomerase family. In terms of assembly, monomer. Mg(2+) serves as cofactor.

The enzyme catalyses ATP-independent breakage of single-stranded DNA, followed by passage and rejoining.. Releases the supercoiling and torsional tension of DNA, which is introduced during the DNA replication and transcription, by transiently cleaving and rejoining one strand of the DNA duplex. Introduces a single-strand break via transesterification at a target site in duplex DNA. The scissile phosphodiester is attacked by the catalytic tyrosine of the enzyme, resulting in the formation of a DNA-(5'-phosphotyrosyl)-enzyme intermediate and the expulsion of a 3'-OH DNA strand. The free DNA strand then undergoes passage around the unbroken strand, thus removing DNA supercoils. Finally, in the religation step, the DNA 3'-OH attacks the covalent intermediate to expel the active-site tyrosine and restore the DNA phosphodiester backbone. The sequence is that of DNA topoisomerase 1 from Xylella fastidiosa (strain Temecula1 / ATCC 700964).